The following is a 452-amino-acid chain: GTPase Der (452 aa).

EngA-type G domains lie at 4-169 and 177-352; these read PVVA…PPQD and IQMA…EQHR. Residues 10 to 17, 57 to 61, 120 to 123, 183 to 190, 230 to 234, and 295 to 298 each bind GTP; these read GRPNVGKS, DTGGL, NKCE, DTAGI, and NKWD. One can recognise a KH-like domain in the interval 353-438; the sequence is RRVTTAVVNE…PVRLFWRGKQ (86 aa).

Belongs to the TRAFAC class TrmE-Era-EngA-EngB-Septin-like GTPase superfamily. EngA (Der) GTPase family. As to quaternary structure, associates with the 50S ribosomal subunit.

Functionally, GTPase that plays an essential role in the late steps of ribosome biogenesis. This is GTPase Der from Synechococcus sp. (strain RCC307).